A 246-amino-acid polypeptide reads, in one-letter code: Deoxycytidylate 5-hydroxymethyltransferase (246 aa).

The active site involves Cys148.

It belongs to the thymidylate synthase family.

It carries out the reaction dCMP + (6R)-5,10-methylene-5,6,7,8-tetrahydrofolate + H2O = 5-hydroxymethyl-dCMP + (6S)-5,6,7,8-tetrahydrofolate. The chain is Deoxycytidylate 5-hydroxymethyltransferase (42) from Enterobacteria phage T6 (Bacteriophage T6).